We begin with the raw amino-acid sequence, 316 residues long: Olfactory receptor 4N4C (316 aa).

The Cytoplasmic segment spans residues 1-26 (MKIANNTVVTEFILLGLTQSQDIQLL). A helical membrane pass occupies residues 27–47 (VFVLILIFYLIILPGNFLIIF). At 48 to 56 (TIRSDPGLT) the chain is on the extracellular side. Residues 57 to 77 (APLYLFLGNLAFLDASYSFIV) traverse the membrane as a helical segment. Over 78-99 (APRMLVDFLSEKKVISYRGCIT) the chain is Cytoplasmic. A disulfide bridge connects residues cysteine 97 and cysteine 179. A helical transmembrane segment spans residues 100–120 (QLFFLHFLGGGEGLLLVVMAF). Residues 121–143 (DRYIAICRPLHCSTVMNPRACYA) are Extracellular-facing. Residues 144 to 164 (MMLALWLGGFVHSIIQVVLIL) form a helical membrane-spanning segment. The Cytoplasmic segment spans residues 165 to 204 (RLPFCGPNQLDNFFCDVRQVIKLACTDMFVVELLMVFNSG). A helical membrane pass occupies residues 205–225 (LMTLLCFLGLLASYAVILCHV). Residues 226–243 (RRAASEGKNKAMSTCTTR) lie on the Extracellular side of the membrane. Residues 244-264 (VIIILLMFGPAIFIYICPFRA) form a helical membrane-spanning segment. Topologically, residues 265–268 (LPAD) are cytoplasmic. The helical transmembrane segment at 269 to 289 (KMVSLFHTVIFPLMNPMIYTL) threads the bilayer. The Extracellular portion of the chain corresponds to 290 to 316 (RNQEVKTSMKRLLSRHVVCQVDFIIRN).

It belongs to the G-protein coupled receptor 1 family.

The protein resides in the membrane. Odorant receptor. The polypeptide is Olfactory receptor 4N4C (Homo sapiens (Human)).